Consider the following 221-residue polypeptide: Adenylate kinase (221 aa).

An ATP-binding site is contributed by 10-15 (GAGKGT). An NMP region spans residues 30-59 (STGDMLRAAVKAGTPLGLEAKRFMDAGELV). AMP contacts are provided by residues T31, R36, 57–59 (ELV), 85–88 (GFPR), and Q92. The tract at residues 122–159 (GRRSHAASGRTYHVKFNPPKVEGLDDVTGEPLIQRDDD) is LID. ATP is bound by residues R123 and 132 to 133 (TY). AMP-binding residues include R156 and R167. Position 207 (G207) interacts with ATP.

The protein belongs to the adenylate kinase family. In terms of assembly, monomer.

It localises to the cytoplasm. It carries out the reaction AMP + ATP = 2 ADP. The protein operates within purine metabolism; AMP biosynthesis via salvage pathway; AMP from ADP: step 1/1. In terms of biological role, catalyzes the reversible transfer of the terminal phosphate group between ATP and AMP. Plays an important role in cellular energy homeostasis and in adenine nucleotide metabolism. The sequence is that of Adenylate kinase from Paraburkholderia xenovorans (strain LB400).